A 37-amino-acid polypeptide reads, in one-letter code: Cytochrome b6-f complex subunit 5 (37 aa).

The chain crosses the membrane as a helical span at residues 5-25 (LLSGIVLGMIPVTLAGLFVTA).

The protein belongs to the PetG family. The 4 large subunits of the cytochrome b6-f complex are cytochrome b6, subunit IV (17 kDa polypeptide, PetD), cytochrome f and the Rieske protein, while the 4 small subunits are PetG, PetL, PetM and PetN. The complex functions as a dimer.

Its subcellular location is the plastid. The protein localises to the chloroplast thylakoid membrane. Functionally, component of the cytochrome b6-f complex, which mediates electron transfer between photosystem II (PSII) and photosystem I (PSI), cyclic electron flow around PSI, and state transitions. PetG is required for either the stability or assembly of the cytochrome b6-f complex. The protein is Cytochrome b6-f complex subunit 5 of Staurastrum punctulatum (Green alga).